The following is a 619-amino-acid chain: Putative zinc metalloprotease CT_072 (619 aa).

His20 provides a ligand contact to Zn(2+). Residue Glu21 is part of the active site. His24 serves as a coordination point for Zn(2+). Transmembrane regions (helical) follow at residues 103 to 125, 558 to 580, and 593 to 610; these read IFVL…GILY, VLNL…WEIL, and ALVP…FLTL.

This sequence belongs to the peptidase M50B family. Zn(2+) is required as a cofactor.

Its subcellular location is the cell inner membrane. In Chlamydia trachomatis serovar D (strain ATCC VR-885 / DSM 19411 / UW-3/Cx), this protein is Putative zinc metalloprotease CT_072.